Consider the following 465-residue polypeptide: Putative subtilisin-like proteinase 1 (465 aa).

Positions 1-17 (MILAIISLSVVICREVS) are cleaved as a signal peptide. The 72-residue stretch at 19–90 (YIVMFDQDPS…VKMVVKDSPV (72 aa)) folds into the Inhibitor I9 domain. The Peptidase S8 domain occupies 115 to 447 (PWGLARVGGS…PSLFNANKKK (333 aa)). Catalysis depends on charge relay system residues Asp-148 and His-180. A disulfide bridge connects residues Cys-329 and Cys-360. Catalysis depends on Ser-386, which acts as the Charge relay system.

Belongs to the peptidase S8 family.

The protein resides in the secreted. The protein localises to the extracellular space. In terms of biological role, may be involved in the degradation of proteins for nutrient acquisition or possess a regulatory function by proteolytic activation of proproteins. The sequence is that of Putative subtilisin-like proteinase 1 (SPL1) from Encephalitozoon cuniculi (strain GB-M1) (Microsporidian parasite).